Reading from the N-terminus, the 424-residue chain is Glutamyl-tRNA reductase (424 aa).

Residues 51–54, Ser-99, 104–106, and Gln-110 contribute to the substrate site; these read TCNR and EDQ. The active-site Nucleophile is the Cys-52. 179 to 184 contributes to the NADP(+) binding site; that stretch reads GTGEMG.

Belongs to the glutamyl-tRNA reductase family. In terms of assembly, homodimer.

The catalysed reaction is (S)-4-amino-5-oxopentanoate + tRNA(Glu) + NADP(+) = L-glutamyl-tRNA(Glu) + NADPH + H(+). It participates in porphyrin-containing compound metabolism; protoporphyrin-IX biosynthesis; 5-aminolevulinate from L-glutamyl-tRNA(Glu): step 1/2. Catalyzes the NADPH-dependent reduction of glutamyl-tRNA(Glu) to glutamate 1-semialdehyde (GSA). This chain is Glutamyl-tRNA reductase, found in Methanospirillum hungatei JF-1 (strain ATCC 27890 / DSM 864 / NBRC 100397 / JF-1).